A 134-amino-acid polypeptide reads, in one-letter code: S-adenosylmethionine decarboxylase proenzyme (134 aa).

S64 (schiff-base intermediate with substrate; via pyruvic acid) is an active-site residue. Residue S64 is modified to Pyruvic acid (Ser); by autocatalysis. Residue H69 is the Proton acceptor; for processing activity of the active site. C84 acts as the Proton donor; for catalytic activity in catalysis.

This sequence belongs to the prokaryotic AdoMetDC family. Type 1 subfamily. In terms of assembly, heterotetramer of two alpha and two beta chains arranged as a dimer of alpha/beta heterodimers. Pyruvate serves as cofactor. Post-translationally, is synthesized initially as an inactive proenzyme. Formation of the active enzyme involves a self-maturation process in which the active site pyruvoyl group is generated from an internal serine residue via an autocatalytic post-translational modification. Two non-identical subunits are generated from the proenzyme in this reaction, and the pyruvate is formed at the N-terminus of the alpha chain, which is derived from the carboxyl end of the proenzyme. The post-translation cleavage follows an unusual pathway, termed non-hydrolytic serinolysis, in which the side chain hydroxyl group of the serine supplies its oxygen atom to form the C-terminus of the beta chain, while the remainder of the serine residue undergoes an oxidative deamination to produce ammonia and the pyruvoyl group blocking the N-terminus of the alpha chain.

It catalyses the reaction S-adenosyl-L-methionine + H(+) = S-adenosyl 3-(methylsulfanyl)propylamine + CO2. The protein operates within amine and polyamine biosynthesis; S-adenosylmethioninamine biosynthesis; S-adenosylmethioninamine from S-adenosyl-L-methionine: step 1/1. In terms of biological role, catalyzes the decarboxylation of S-adenosylmethionine to S-adenosylmethioninamine (dcAdoMet), the propylamine donor required for the synthesis of the polyamines spermine and spermidine from the diamine putrescine. This Hydrogenobaculum sp. (strain Y04AAS1) protein is S-adenosylmethionine decarboxylase proenzyme.